Consider the following 189-residue polypeptide: Crossover junction endodeoxyribonuclease RuvC (189 aa).

Active-site residues include aspartate 7, glutamate 68, and aspartate 141. The Mg(2+) site is built by aspartate 7, glutamate 68, and aspartate 141.

The protein belongs to the RuvC family. Homodimer which binds Holliday junction (HJ) DNA. The HJ becomes 2-fold symmetrical on binding to RuvC with unstacked arms; it has a different conformation from HJ DNA in complex with RuvA. In the full resolvosome a probable DNA-RuvA(4)-RuvB(12)-RuvC(2) complex forms which resolves the HJ. The cofactor is Mg(2+).

The protein resides in the cytoplasm. The enzyme catalyses Endonucleolytic cleavage at a junction such as a reciprocal single-stranded crossover between two homologous DNA duplexes (Holliday junction).. In terms of biological role, the RuvA-RuvB-RuvC complex processes Holliday junction (HJ) DNA during genetic recombination and DNA repair. Endonuclease that resolves HJ intermediates. Cleaves cruciform DNA by making single-stranded nicks across the HJ at symmetrical positions within the homologous arms, yielding a 5'-phosphate and a 3'-hydroxyl group; requires a central core of homology in the junction. The consensus cleavage sequence is 5'-(A/T)TT(C/G)-3'. Cleavage occurs on the 3'-side of the TT dinucleotide at the point of strand exchange. HJ branch migration catalyzed by RuvA-RuvB allows RuvC to scan DNA until it finds its consensus sequence, where it cleaves and resolves the cruciform DNA. The sequence is that of Crossover junction endodeoxyribonuclease RuvC from Rhodococcus jostii (strain RHA1).